The chain runs to 702 residues: Polyribonucleotide nucleotidyltransferase (702 aa).

Residues Asp-486 and Asp-492 each contribute to the Mg(2+) site. A KH domain is found at 553–612 (PSMATIKIDPEKIRDVIGKGGATIRSITEQTGASIDLDDDGTVRIYAADKASSDAALLKI). Residues 622-690 (DKLYKGKVVR…ARGRIKLSMK (69 aa)) enclose the S1 motif domain.

The protein belongs to the polyribonucleotide nucleotidyltransferase family. In terms of assembly, component of the RNA degradosome, which is a multiprotein complex involved in RNA processing and mRNA degradation. Requires Mg(2+) as cofactor.

The protein resides in the cytoplasm. It catalyses the reaction RNA(n+1) + phosphate = RNA(n) + a ribonucleoside 5'-diphosphate. Functionally, involved in mRNA degradation. Catalyzes the phosphorolysis of single-stranded polyribonucleotides processively in the 3'- to 5'-direction. This Marinomonas sp. (strain MWYL1) protein is Polyribonucleotide nucleotidyltransferase.